A 426-amino-acid chain; its full sequence is Histidine--tRNA ligase (426 aa).

It belongs to the class-II aminoacyl-tRNA synthetase family.

The protein resides in the cytoplasm. The catalysed reaction is tRNA(His) + L-histidine + ATP = L-histidyl-tRNA(His) + AMP + diphosphate + H(+). The polypeptide is Histidine--tRNA ligase (Saccharolobus islandicus (strain L.S.2.15 / Lassen #1) (Sulfolobus islandicus)).